An 815-amino-acid chain; its full sequence is Chromatin assembly factor 1 subunit FAS1 (815 aa).

Disordered stretches follow at residues 1 to 39 (MDEVSTVNENENRKTMIEPKKLNKRKREPTAIENLTSEE), 292 to 330 (NNKEKEETESRKRIKKQQDESEKEQKRREKEQAELKKQL), 434 to 477 (KLST…KKSR), 502 to 577 (QVVK…EGVQ), and 791 to 815 (RCLPPSTKPQPAVEDAAERLENENA). Basic and acidic residues-rich tracts occupy residues 10-21 (NENRKTMIEPKK) and 292-328 (NNKEKEETESRKRIKKQQDESEKEQKRREKEQAELKK). The stretch at 244 to 336 (EEKLLLKQLE…KKQLQVQKQA (93 aa)) forms a coiled coil. 2 stretches are compositionally biased toward acidic residues: residues 516-532 (LDYEVDSDEEWEEEEAG) and 554-576 (DDEDDSEDDFMVPDGYLSEDEGV). Residues 806-815 (AAERLENENA) are compositionally biased toward basic and acidic residues.

The protein belongs to the CHAF1A family. In terms of assembly, component of the chromatin assembly factor 1 (CAF-1) complex, composed of FAS1, FAS2 and MSI1. Interacts with CYP71. In terms of tissue distribution, expressed in the shoot apical meristem, young leaf primordia, root tip and first lateral root primordium at the hypocotyl/root junction.

It is found in the nucleus. Its function is as follows. Component of the chromatin assembly factor complex (CAF-1) involved in chromatin assembly following DNA replication and DNA repair. Assembles histone octamers onto replicating DNA in vitro. Required for several aspects of development, including seedling growth and leaf hair differentiation. Plays a critical role in the organization of shoot apical meristem (SAM) and root apical meristem (RAM) during postembryonic development by facilitating stable maintenance of gene expression states. Seems not required to maintain transcriptional repression of heterochromatic genes. Involved in heterologous recombination. May repress endocycle. This chain is Chromatin assembly factor 1 subunit FAS1 (FAS1), found in Arabidopsis thaliana (Mouse-ear cress).